The primary structure comprises 83 residues: Short neurotoxin OKI-Ed (83 aa).

Residues 1-21 (MKTLLLTLVVVTIVCLDLGYT) form the signal peptide. Intrachain disulfides connect Cys-24-Cys-45, Cys-38-Cys-62, Cys-64-Cys-75, and Cys-76-Cys-81.

The protein belongs to the three-finger toxin family. Short-chain subfamily. Type I alpha-neurotoxin sub-subfamily. Expressed by the venom gland.

Its subcellular location is the secreted. Binds to muscle nicotinic acetylcholine receptor (nAChR) and inhibit acetylcholine from binding to the receptor, thereby impairing neuromuscular transmission. In Laticauda semifasciata (Black-banded sea krait), this protein is Short neurotoxin OKI-Ed.